We begin with the raw amino-acid sequence, 846 residues long: Translation initiation factor IF-2 (846 aa).

The disordered stretch occupies residues 198–219 (YKREEEEKKSKAKKAGGKGFKK). A compositionally biased stretch (basic residues) spans 207 to 219 (SKAKKAGGKGFKK). In terms of domain architecture, tr-type G spans 345-512 (SRAPVVTIMG…AVLLQSEVLE (168 aa)). A G1 region spans residues 354–361 (GHVDHGKT). 354-361 (GHVDHGKT) lines the GTP pocket. Residues 379 to 383 (GITQH) are G2. The segment at 400–403 (DTPG) is G3. GTP-binding positions include 400-404 (DTPGH) and 454-457 (NKID). The tract at residues 454-457 (NKID) is G4. The interval 490–492 (SAK) is G5.

This sequence belongs to the TRAFAC class translation factor GTPase superfamily. Classic translation factor GTPase family. IF-2 subfamily.

The protein resides in the cytoplasm. Its function is as follows. One of the essential components for the initiation of protein synthesis. Protects formylmethionyl-tRNA from spontaneous hydrolysis and promotes its binding to the 30S ribosomal subunits. Also involved in the hydrolysis of GTP during the formation of the 70S ribosomal complex. In Francisella tularensis subsp. holarctica (strain OSU18), this protein is Translation initiation factor IF-2.